Here is a 491-residue protein sequence, read N- to C-terminus: Argininosuccinate lyase (491 aa).

It belongs to the lyase 1 family. Argininosuccinate lyase subfamily.

Its subcellular location is the cytoplasm. It catalyses the reaction 2-(N(omega)-L-arginino)succinate = fumarate + L-arginine. The protein operates within amino-acid biosynthesis; L-arginine biosynthesis; L-arginine from L-ornithine and carbamoyl phosphate: step 3/3. In Methanosarcina barkeri (strain Fusaro / DSM 804), this protein is Argininosuccinate lyase.